The following is a 140-amino-acid chain: Nucleoside diphosphate kinase (140 aa).

Residues K11, F59, R87, T93, R104, and N114 each coordinate ATP. H117 acts as the Pros-phosphohistidine intermediate in catalysis.

The protein belongs to the NDK family. In terms of assembly, homotetramer. It depends on Mg(2+) as a cofactor.

It is found in the cytoplasm. The enzyme catalyses a 2'-deoxyribonucleoside 5'-diphosphate + ATP = a 2'-deoxyribonucleoside 5'-triphosphate + ADP. The catalysed reaction is a ribonucleoside 5'-diphosphate + ATP = a ribonucleoside 5'-triphosphate + ADP. Major role in the synthesis of nucleoside triphosphates other than ATP. The ATP gamma phosphate is transferred to the NDP beta phosphate via a ping-pong mechanism, using a phosphorylated active-site intermediate. This chain is Nucleoside diphosphate kinase, found in Bradyrhizobium sp. (strain ORS 278).